Here is a 634-residue protein sequence, read N- to C-terminus: Growth hormone receptor (634 aa).

Positions 1–18 are cleaved as a signal peptide; it reads MDLWQLLLTLAVAGSSDA. The Extracellular portion of the chain corresponds to 19-260; it reads FSGSEATPAF…NPSACEEDFQ (242 aa). Residue Asn-46 is glycosylated (N-linked (GlcNAc...) asparagine). An intrachain disulfide couples Cys-56 to Cys-66. An N-linked (GlcNAc...) asparagine glycan is attached at Asn-73. The cysteines at positions 97 and 108 are disulfide-linked. An N-linked (GlcNAc...) asparagine glycan is attached at Asn-111. A disulfide bridge connects residues Cys-122 and Cys-136. The 104-residue stretch at 147–250 folds into the Fibronectin type-III domain; it reads PPVGLNWTLL…EVLLITFPQM (104 aa). N-linked (GlcNAc...) asparagine glycosylation is found at Asn-152, Asn-157, and Asn-196. The short motif at 236–240 is the WSXWS motif element; sequence YGKFS. A helical membrane pass occupies residues 261–284; that stretch reads FPWFLIIIFGILGLAVTLYLLIFS. The Cytoplasmic segment spans residues 285–634; it reads KQQRIKMLIL…STDQLNKIMP (350 aa). The interval 290-375 is required for JAK2 binding; that stretch reads KMLILPPVPV…HEKSLNIFGA (86 aa). A Box 1 motif motif is present at residues 293-301; that stretch reads ILPPVPVPK. The UbE motif signature appears at 336–345; that stretch reads DSWVEFIELD. Ser-337 is modified (phosphoserine).

Belongs to the type I cytokine receptor family. Type 1 subfamily. On growth hormone (GH) binding, forms homodimers and binds JAK2 via a box 1-containing domain. Post-translationally, the soluble form (GHBP) is produced by phorbol ester-promoted proteolytic cleavage at the cell surface (shedding) by ADAM17/TACE. Shedding is inhibited by growth hormone (GH) binding to the receptor probably due to a conformational change in GHR rendering the receptor inaccessible to ADAM17. On GH binding, phosphorylated on tyrosine residues in the cytoplasmic domain by JAK2. In terms of processing, ubiquitinated by the ECS(SOCS2) complex following ligand-binding and phosphorylation by JAK2, leading to its degradation by the proteasome. Regulation by the ECS(SOCS2) complex acts as a negative feedback loop of growth hormone receptor signaling. Ubiquitination is not sufficient for GHR internalization.

It localises to the cell membrane. Its subcellular location is the secreted. Functionally, receptor for pituitary gland growth hormone (GH1) involved in regulating postnatal body growth. On ligand binding, couples to the JAK2/STAT5 pathway. In terms of biological role, the soluble form (GHBP) acts as a reservoir of growth hormone in plasma and may be a modulator/inhibitor of GH signaling. The sequence is that of Growth hormone receptor (GHR) from Bos taurus (Bovine).